Here is a 524-residue protein sequence, read N- to C-terminus: Maturase K (524 aa).

The protein belongs to the intron maturase 2 family. MatK subfamily.

Its subcellular location is the plastid. It is found in the chloroplast. Usually encoded in the trnK tRNA gene intron. Probably assists in splicing its own and other chloroplast group II introns. The protein is Maturase K of Welwitschia mirabilis (Tree tumbo).